A 162-amino-acid chain; its full sequence is Probable metalloprotease y4jG (162 aa).

Residues 9–147 enclose the MPN domain; that stretch reads TVALPRDCVS…YRLDAKANWN (139 aa). Positions 94, 96, and 107 each coordinate Zn(2+).

Belongs to the peptidase M67B family.

This Sinorhizobium fredii (strain NBRC 101917 / NGR234) protein is Probable metalloprotease y4jG.